A 433-amino-acid polypeptide reads, in one-letter code: MIIIEKTEQIKGTINAPPSKSYTHRAVICASLADGTSEIISPLNSADCLSSVHGAMMLGAEIDATDKNKWVVVGNNNSPKTPNNVVDIGNSGTTLRILTGIASQIPEGYAILTGDSSIITRPMQPLLDALNQLGIRAFSSKTDGTAPIIVEHGEIKNNVVKIRGDMSSQFITSLMMTMPFSKMDSTIELTTPLKSAPYLDITIDVLDKFGVKIEKVKNKNKLTKFIIKGNQKYKPYSYTVEGDCSSASYFIAAGVLMNSDITINNIFKNSKQGDREIVNIVKKMGAPIIEEEDKIIIKGPYKLKGIDIDVKDTPDLVPTIAILGCFAEGTTTIYNGEHVRLKECDRLMACAKELTKMGAKITEKPDGLIIEGVGKLNGAEMETYHDHRLVMAFTVAGMMAEGKTIIKGEDAVKISFPNFVEAIKSIGANITIK.

The 3-phosphoshikimate site is built by lysine 20, serine 21, and arginine 25. Residue lysine 20 coordinates phosphoenolpyruvate. Residues glycine 92 and arginine 121 each contribute to the phosphoenolpyruvate site. 3-phosphoshikimate is bound by residues serine 167, serine 168, glutamine 169, serine 195, aspartate 315, and lysine 342. Glutamine 169 contributes to the phosphoenolpyruvate binding site. Aspartate 315 (proton acceptor) is an active-site residue. Phosphoenolpyruvate-binding residues include arginine 346 and arginine 388.

Belongs to the EPSP synthase family. In terms of assembly, monomer.

The protein resides in the cytoplasm. The enzyme catalyses 3-phosphoshikimate + phosphoenolpyruvate = 5-O-(1-carboxyvinyl)-3-phosphoshikimate + phosphate. The protein operates within metabolic intermediate biosynthesis; chorismate biosynthesis. Catalyzes the transfer of the enolpyruvyl moiety of phosphoenolpyruvate (PEP) to the 5-hydroxyl of shikimate-3-phosphate (S3P) to produce enolpyruvyl shikimate-3-phosphate and inorganic phosphate. In Methanococcus aeolicus (strain ATCC BAA-1280 / DSM 17508 / OCM 812 / Nankai-3), this protein is 3-phosphoshikimate 1-carboxyvinyltransferase.